The chain runs to 471 residues: V-type ATP synthase beta chain (471 aa).

Belongs to the ATPase alpha/beta chains family.

Functionally, produces ATP from ADP in the presence of a proton gradient across the membrane. The V-type beta chain is a regulatory subunit. This chain is V-type ATP synthase beta chain, found in Streptococcus pyogenes serotype M18 (strain MGAS8232).